Reading from the N-terminus, the 242-residue chain is 1-(5-phosphoribosyl)-5-[(5-phosphoribosylamino)methylideneamino] imidazole-4-carboxamide isomerase (242 aa).

The active-site Proton acceptor is D8. D129 (proton donor) is an active-site residue.

The protein belongs to the HisA/HisF family.

Its subcellular location is the cytoplasm. It carries out the reaction 1-(5-phospho-beta-D-ribosyl)-5-[(5-phospho-beta-D-ribosylamino)methylideneamino]imidazole-4-carboxamide = 5-[(5-phospho-1-deoxy-D-ribulos-1-ylimino)methylamino]-1-(5-phospho-beta-D-ribosyl)imidazole-4-carboxamide. It functions in the pathway amino-acid biosynthesis; L-histidine biosynthesis; L-histidine from 5-phospho-alpha-D-ribose 1-diphosphate: step 4/9. The chain is 1-(5-phosphoribosyl)-5-[(5-phosphoribosylamino)methylideneamino] imidazole-4-carboxamide isomerase from Dictyoglomus turgidum (strain DSM 6724 / Z-1310).